Here is a 671-residue protein sequence, read N- to C-terminus: DNA ligase (671 aa).

Residues 32–36 (DAEYD), 81–82 (SL), and Glu-113 each bind NAD(+). The N6-AMP-lysine intermediate role is filled by Lys-115. Residues Arg-136, Glu-173, Lys-290, and Lys-314 each contribute to the NAD(+) site. Zn(2+) is bound by residues Cys-408, Cys-411, Cys-426, and Cys-432. Residues 593-671 (EIDSPFAGKT…EAEMLRLLGS (79 aa)) enclose the BRCT domain.

Belongs to the NAD-dependent DNA ligase family. LigA subfamily. Mg(2+) serves as cofactor. It depends on Mn(2+) as a cofactor.

The enzyme catalyses NAD(+) + (deoxyribonucleotide)n-3'-hydroxyl + 5'-phospho-(deoxyribonucleotide)m = (deoxyribonucleotide)n+m + AMP + beta-nicotinamide D-nucleotide.. DNA ligase that catalyzes the formation of phosphodiester linkages between 5'-phosphoryl and 3'-hydroxyl groups in double-stranded DNA using NAD as a coenzyme and as the energy source for the reaction. It is essential for DNA replication and repair of damaged DNA. This is DNA ligase from Escherichia coli (strain ATCC 8739 / DSM 1576 / NBRC 3972 / NCIMB 8545 / WDCM 00012 / Crooks).